The primary structure comprises 319 residues: Biotin synthase (319 aa).

The Radical SAM core domain maps to Ile-44–Arg-273. [4Fe-4S] cluster contacts are provided by Cys-62, Cys-66, and Cys-69. Residues Ser-106, Cys-138, Cys-198, and Arg-268 each coordinate [2Fe-2S] cluster.

Belongs to the radical SAM superfamily. Biotin synthase family. Homodimer. It depends on [4Fe-4S] cluster as a cofactor. [2Fe-2S] cluster serves as cofactor.

It carries out the reaction (4R,5S)-dethiobiotin + (sulfur carrier)-SH + 2 reduced [2Fe-2S]-[ferredoxin] + 2 S-adenosyl-L-methionine = (sulfur carrier)-H + biotin + 2 5'-deoxyadenosine + 2 L-methionine + 2 oxidized [2Fe-2S]-[ferredoxin]. The protein operates within cofactor biosynthesis; biotin biosynthesis; biotin from 7,8-diaminononanoate: step 2/2. In terms of biological role, catalyzes the conversion of dethiobiotin (DTB) to biotin by the insertion of a sulfur atom into dethiobiotin via a radical-based mechanism. This Clostridium perfringens (strain ATCC 13124 / DSM 756 / JCM 1290 / NCIMB 6125 / NCTC 8237 / Type A) protein is Biotin synthase.